A 377-amino-acid chain; its full sequence is Lactosylceramide 1,3-N-acetyl-beta-D-glucosaminyltransferase A (377 aa).

The Cytoplasmic portion of the chain corresponds to 1 to 12; that stretch reads MLISARRLRRCQ. The helical; Signal-anchor for type II membrane protein transmembrane segment at 13-30 threads the bilayer; the sequence is FLQLLASCFVLSLMALLV. Over 31-377 the chain is Lumenal; that stretch reads QEDNSLISHV…DTYPCSAAWS (347 aa). N-linked (GlcNAc...) asparagine glycosylation is found at N56, N167, and N275.

This sequence belongs to the glycosyltransferase 31 family.

The protein resides in the golgi apparatus membrane. It catalyses the reaction a beta-D-Gal-(1-&gt;4)-beta-D-Glc-(1&lt;-&gt;1)-Cer(d18:1(4E)) + UDP-N-acetyl-alpha-D-glucosamine = a beta-D-GlcNAc-(1-&gt;3)-beta-D-Gal-(1-&gt;4)-beta-D-Glc-(1&lt;-&gt;1)-Cer(d18:1(4E)) + UDP + H(+). The enzyme catalyses a neolactoside nLc4Cer(d18:1(4E)) + UDP-N-acetyl-alpha-D-glucosamine = a neolactoside IV(3)-beta-GlcNAc-nLc4Cer(d18:1(4E)) + UDP + H(+). Its pathway is protein modification; protein glycosylation. Beta-1,3-N-acetylglucosaminyltransferase that plays a key role in the synthesis of lacto- or neolacto-series carbohydrate chains on glycolipids. This Xenopus laevis (African clawed frog) protein is Lactosylceramide 1,3-N-acetyl-beta-D-glucosaminyltransferase A (b3gnt5-a).